The chain runs to 759 residues: Cullin-4A (759 aa).

Residue lysine 8 forms a Glycyl lysine isopeptide (Lys-Gly) (interchain with G-Cter in SUMO2) linkage. The residue at position 10 (serine 10) is a Phosphoserine. Lysine 33 participates in a covalent cross-link: Glycyl lysine isopeptide (Lys-Gly) (interchain with G-Cter in ubiquitin). The 61-residue stretch at 691 to 751 (DRQYQIDAAI…RDYMERDKDN (61 aa)) folds into the Cullin neddylation domain. Residue lysine 705 forms a Glycyl lysine isopeptide (Lys-Gly) (interchain with G-Cter in NEDD8) linkage.

Belongs to the cullin family. Can self-associate. Component of multiple DCX (DDB1-CUL4-X-box) E3 ubiquitin-protein ligase complexes that seem to consist of DDB1, CUL4A or CUL4B, RBX1 and a variable substrate recognition component which seems to belong to a protein family described as DCAF (Ddb1- and Cul4-associated factor) or CDW (CUL4-DDB1-associated WD40-repeat) proteins. Component of the CSA complex (DCX(ERCC8) complex) containing ERCC8, RBX1, DDB1 and CUL4A; the CSA complex interacts with RNA polymerase II; upon UV irradiation it interacts with the COP9 signalosome and preferentially with the hyperphosphorylated form of RNA polymerase II. Component of the DCX(DET1-COP1) complex with the substrate recognition component DET1 and COP1. Component of the DCX(DDB2) complex with the substrate recognition component DDB2. Component of the DCX(DTL) complex with the putative substrate recognition component DTL. Component of DCX complexes part of the DesCEND (destruction via C-end degrons) pathway, which contain either TRPC4AP or DCAF12 as substrate-recognition component. Component of the DCX(AMBRA1) complex with the substrate recognition component AMBRA1. Interacts with DDB1, RBX1, RNF7, CDT1, TIP120A/CAND1, SKP2, CDKN1B, MDM2, TP53 and HOXA9. Interacts with DDB2; the interactions with DDB2 and CAND1 are mutually exclusive. Interacts with DCAF1, DTL, DDA1, DCAF6, DCAF4, DCAF16, DCAF17, DET1, WDTC1, DCAF5, DCAF11, WDR24A, COP1, PAFAH1B1, ERCC8, GRWD1, FBXW5, RBBP7, GNB2, WSB1, WSB2, NUP43, PWP1, FBXW8, ATG16L1, KATNB1, RBBP4, RBBP5, LRWD1 and DCAF8. May interact with WDR26, WDR51B, SNRNP40, WDR61, WDR76, WDR5. Interacts (when neddylated) with ARIH1; leading to activate the E3 ligase activity of ARIH1. The DDB1-CUL4A complex interacts with CRY1. Interacts (unneddylated form) with DCUN1D1, DCUN1D2, DCUN1D3, DCUN1D4 and DCUN1D5; these interactions promote the cullin neddylation. As to quaternary structure, (Microbial infection) Interacts with Epstein-Barr virus BPLF1. Post-translationally, neddylated; required for activity of cullin-RING-based E3 ubiquitin-protein ligase complexes. Deneddylated via its interaction with the COP9 signalosome (CSN) complex. In terms of processing, (Microbial infection) Deneddylated by Epstein-Barr virus BPLF1 leading to a S-phase-like environment that is required for efficient replication of the viral genome.

Its pathway is protein modification; protein ubiquitination. Core component of multiple cullin-RING-based E3 ubiquitin-protein ligase complexes which mediate the ubiquitination of target proteins. As a scaffold protein may contribute to catalysis through positioning of the substrate and the ubiquitin-conjugating enzyme. The E3 ubiquitin-protein ligase activity of the complex is dependent on the neddylation of the cullin subunit and is inhibited by the association of the deneddylated cullin subunit with TIP120A/CAND1. The functional specificity of the E3 ubiquitin-protein ligase complex depends on the variable substrate recognition component. DCX(DET1-COP1) directs ubiquitination of JUN. DCX(DDB2) directs ubiquitination of XPC. DCX(DDB2) ubiquitinates histones H3-H4 and is required for efficient histone deposition during replication-coupled (H3.1) and replication-independent (H3.3) nucleosome assembly, probably by facilitating the transfer of H3 from ASF1A/ASF1B to other chaperones involved in histone deposition. DCX(DTL) plays a role in PCNA-dependent polyubiquitination of CDT1 and MDM2-dependent ubiquitination of p53/TP53 in response to radiation-induced DNA damage and during DNA replication. DCX(DTL) directs autoubiquitination of DTL. In association with DDB1 and SKP2 probably is involved in ubiquitination of CDKN1B/p27kip. Is involved in ubiquitination of HOXA9. The DDB1-CUL4A-DTL E3 ligase complex regulates the circadian clock function by mediating the ubiquitination and degradation of CRY1. The DCX(ERCC8) complex (also named CSA complex) plays a role in transcription-coupled repair (TCR). A number of DCX complexes (containing either TRPC4AP or DCAF12 as substrate-recognition component) are part of the DesCEND (destruction via C-end degrons) pathway, which recognizes a C-degron located at the extreme C terminus of target proteins, leading to their ubiquitination and degradation. The DCX(AMBRA1) complex is a master regulator of the transition from G1 to S cell phase by mediating ubiquitination of phosphorylated cyclin-D (CCND1, CCND2 and CCND3). The DCX(AMBRA1) complex also acts as a regulator of Cul5-RING (CRL5) E3 ubiquitin-protein ligase complexes by mediating ubiquitination and degradation of Elongin-C (ELOC) component of CRL5 complexes. With CUL4B, contributes to ribosome biogenesis. This is Cullin-4A from Homo sapiens (Human).